A 336-amino-acid chain; its full sequence is Holliday junction branch migration complex subunit RuvB (336 aa).

Residues Ala4–Tyr184 form a large ATPase domain (RuvB-L) region. Residues Ile23, Arg24, Gly65, Lys68, Thr69, Thr70, Glu131–Tyr133, Arg174, Tyr184, and Arg221 each bind ATP. Thr69 contacts Mg(2+). The tract at residues Gln185–Asn255 is small ATPAse domain (RuvB-S). The tract at residues Ala258–Pro336 is head domain (RuvB-H). The DNA site is built by Arg294, Arg313, and Arg318.

The protein belongs to the RuvB family. Homohexamer. Forms an RuvA(8)-RuvB(12)-Holliday junction (HJ) complex. HJ DNA is sandwiched between 2 RuvA tetramers; dsDNA enters through RuvA and exits via RuvB. An RuvB hexamer assembles on each DNA strand where it exits the tetramer. Each RuvB hexamer is contacted by two RuvA subunits (via domain III) on 2 adjacent RuvB subunits; this complex drives branch migration. In the full resolvosome a probable DNA-RuvA(4)-RuvB(12)-RuvC(2) complex forms which resolves the HJ.

It is found in the cytoplasm. The enzyme catalyses ATP + H2O = ADP + phosphate + H(+). Its function is as follows. The RuvA-RuvB-RuvC complex processes Holliday junction (HJ) DNA during genetic recombination and DNA repair, while the RuvA-RuvB complex plays an important role in the rescue of blocked DNA replication forks via replication fork reversal (RFR). RuvA specifically binds to HJ cruciform DNA, conferring on it an open structure. The RuvB hexamer acts as an ATP-dependent pump, pulling dsDNA into and through the RuvAB complex. RuvB forms 2 homohexamers on either side of HJ DNA bound by 1 or 2 RuvA tetramers; 4 subunits per hexamer contact DNA at a time. Coordinated motions by a converter formed by DNA-disengaged RuvB subunits stimulates ATP hydrolysis and nucleotide exchange. Immobilization of the converter enables RuvB to convert the ATP-contained energy into a lever motion, pulling 2 nucleotides of DNA out of the RuvA tetramer per ATP hydrolyzed, thus driving DNA branch migration. The RuvB motors rotate together with the DNA substrate, which together with the progressing nucleotide cycle form the mechanistic basis for DNA recombination by continuous HJ branch migration. Branch migration allows RuvC to scan DNA until it finds its consensus sequence, where it cleaves and resolves cruciform DNA. The sequence is that of Holliday junction branch migration complex subunit RuvB from Klebsiella pneumoniae subsp. pneumoniae (strain ATCC 700721 / MGH 78578).